A 745-amino-acid polypeptide reads, in one-letter code: Centromere protein I (745 aa).

Residues 1–27 (MATPRLTRNSQQQNRISQGSNSRQTTL) show a composition bias toward polar residues. The tract at residues 1-58 (MATPRLTRNSQQQNRISQGSNSRQTTLLDWKVKDKAGNSKSVLEESSSLEDSNHADDQ) is disordered. Positions 39–50 (SKSVLEESSSLE) are enriched in low complexity.

It belongs to the CENP-I/CTF3 family. In terms of assembly, component of the CENPA-CAD complex, composed of CENPI, CENPK, CENPL, CENPO, CENPP, CENPQ, CENPR and CENPS. The CENPA-CAD complex interacts with the CENPA-NAC complex, at least composed of CENPA, CENPC, CENPH, CENPM, CENPN, CENPT and CENPU. Interacts with SENP6. In terms of processing, sumoylated. Sumoylated form can be polyubiquitinated by RNF4, leading to its degradation. Desumoylation by SENP6 prevents its degradation. As to expression, highly expressed in testis, ovary and spleen. A much lower mRNA level is found in brain and lung, and no expression is detected in liver, kidney, heart, muscle, pituitary gland, prostate, epididymis and seminal vesicle.

It is found in the nucleus. It localises to the chromosome. The protein resides in the centromere. In terms of biological role, component of the CENPA-CAD (nucleosome distal) complex, a complex recruited to centromeres which is involved in assembly of kinetochore proteins, mitotic progression and chromosome segregation. May be involved in incorporation of newly synthesized CENPA into centromeres via its interaction with the CENPA-NAC complex. Required for the localization of CENPF, MAD1L1 and MAD2 (MAD2L1 or MAD2L2) to kinetochores. Involved in the response of gonadal tissues to follicle-stimulating hormone. The sequence is that of Centromere protein I (Cenpi) from Rattus norvegicus (Rat).